We begin with the raw amino-acid sequence, 227 residues long: Probable septum site-determining protein MinC (227 aa).

Belongs to the MinC family. Interacts with MinD and FtsZ.

Its function is as follows. Cell division inhibitor that blocks the formation of polar Z ring septums. Rapidly oscillates between the poles of the cell to destabilize FtsZ filaments that have formed before they mature into polar Z rings. Prevents FtsZ polymerization. The chain is Probable septum site-determining protein MinC from Geobacillus thermodenitrificans (strain NG80-2).